The sequence spans 204 residues: Outer-membrane lipoprotein LolB (204 aa).

Positions 1–20 (MLRSRRLALLCLATPLWLAA) are cleaved as a signal peptide. C21 is lipidated: N-palmitoyl cysteine. C21 carries the S-diacylglycerol cysteine lipid modification. Residues 131–150 (GRAAPGTPSNVTRDANGRPD) are disordered.

It belongs to the LolB family. In terms of assembly, monomer.

It localises to the cell outer membrane. In terms of biological role, plays a critical role in the incorporation of lipoproteins in the outer membrane after they are released by the LolA protein. This is Outer-membrane lipoprotein LolB from Cupriavidus metallidurans (strain ATCC 43123 / DSM 2839 / NBRC 102507 / CH34) (Ralstonia metallidurans).